A 367-amino-acid chain; its full sequence is Chorismate synthase (367 aa).

Residues 39–60 (EEFSHDLQRRASGKSRHTSARR) are disordered. NADP(+) is bound by residues Arg-48 and Arg-54. Residues 125 to 127 (RSS), 238 to 239 (NA), Gly-278, 293 to 297 (KPTSS), and Arg-319 each bind FMN.

Belongs to the chorismate synthase family. In terms of assembly, homotetramer. The cofactor is FMNH2.

The enzyme catalyses 5-O-(1-carboxyvinyl)-3-phosphoshikimate = chorismate + phosphate. It functions in the pathway metabolic intermediate biosynthesis; chorismate biosynthesis; chorismate from D-erythrose 4-phosphate and phosphoenolpyruvate: step 7/7. Catalyzes the anti-1,4-elimination of the C-3 phosphate and the C-6 proR hydrogen from 5-enolpyruvylshikimate-3-phosphate (EPSP) to yield chorismate, which is the branch point compound that serves as the starting substrate for the three terminal pathways of aromatic amino acid biosynthesis. This reaction introduces a second double bond into the aromatic ring system. The protein is Chorismate synthase of Xanthomonas oryzae pv. oryzae (strain MAFF 311018).